Consider the following 437-residue polypeptide: Argininosuccinate lyase (437 aa).

The protein belongs to the lyase 1 family. Argininosuccinate lyase subfamily.

It is found in the cytoplasm. The enzyme catalyses 2-(N(omega)-L-arginino)succinate = fumarate + L-arginine. The protein operates within amino-acid biosynthesis; L-arginine biosynthesis; L-arginine from L-ornithine and carbamoyl phosphate: step 3/3. This chain is Argininosuccinate lyase, found in Clostridium acetobutylicum (strain ATCC 824 / DSM 792 / JCM 1419 / IAM 19013 / LMG 5710 / NBRC 13948 / NRRL B-527 / VKM B-1787 / 2291 / W).